The chain runs to 198 residues: RxLR effector protein CRE4 (198 aa).

Positions 1–20 (MLRSFLLIVATVSLFGQCKP) are cleaved as a signal peptide. The RxLR-dEER motif lies at 43-52 (RFVRTNDEER).

Belongs to the RxLR effector family.

The protein localises to the secreted. It is found in the host cytoplasm. It localises to the host nucleus. Its subcellular location is the host nucleolus. In terms of biological role, effector that is involved in host plant infection. Contributes to virulence during the early infection stage, by inhibiting plant defense responses induced by both PAMP-triggered immunity (PTI) and effector-triggered immunity (ETI). The polypeptide is RxLR effector protein CRE4 (CRE4) (Phytophthora infestans (strain T30-4) (Potato late blight agent)).